Consider the following 330-residue polypeptide: Transcription factor TGA5 (330 aa).

Positions 1–13 (MGDTSPRTSVSTD) are enriched in polar residues. The segment at 1–64 (MGDTSPRTSV…REAARKSRLR (64 aa)) is disordered. Positions 35–47 (SSDRSKSKMDQKT) are enriched in basic and acidic residues. The region spanning 44-107 (DQKTLRRLAQ…SSGDQAHSTA (64 aa)) is the bZIP domain. 2 coiled-coil regions span residues 45-98 (QKTL…FISS) and 211-244 (EQQS…SLAD). A basic motif region spans residues 46-66 (KTLRRLAQNREAARKSRLRKK). A leucine-zipper region spans residues 72 to 86 (LENSRLKLTQLEQEL). One can recognise a DOG1 domain in the interval 111–327 (AMAFDVEYRR…RALSSLWLAR (217 aa)).

It belongs to the bZIP family. Binds DNA as a dimer. Interaction with the Dof domain protein OBP1 enhances the binding to the ocs element. Interacts with NPR1, NPR3 and NPR4. In terms of tissue distribution, predominantly expressed in roots.

The protein resides in the nucleus. Functionally, transcriptional activator that binds specifically to the DNA sequence 5'-TGACG-3'. Recognizes ocs elements like the as-1 motif of the cauliflower mosaic virus 35S promoter. Binding to the as-1-like cis elements mediate auxin- and salicylic acid-inducible transcription. May be involved in the induction of the systemic acquired resistance (SAR) via its interaction with NPR1. Could also bind to the Hex-motif (5'-TGACGTGG-3') another cis-acting element found in plant histone promoters. This is Transcription factor TGA5 (TGA5) from Arabidopsis thaliana (Mouse-ear cress).